We begin with the raw amino-acid sequence, 449 residues long: Kynurenine 3-monooxygenase (449 aa).

The protein belongs to the aromatic-ring hydroxylase family. KMO subfamily. The cofactor is FAD.

It catalyses the reaction L-kynurenine + NADPH + O2 + H(+) = 3-hydroxy-L-kynurenine + NADP(+) + H2O. It functions in the pathway cofactor biosynthesis; NAD(+) biosynthesis; quinolinate from L-kynurenine: step 1/3. Its function is as follows. Catalyzes the hydroxylation of L-kynurenine (L-Kyn) to form 3-hydroxy-L-kynurenine (L-3OHKyn). Required for synthesis of quinolinic acid. This chain is Kynurenine 3-monooxygenase, found in Legionella pneumophila (strain Lens).